Reading from the N-terminus, the 239-residue chain is Small ribosomal subunit protein uS3 (239 aa).

The KH type-2 domain maps to 39 to 107 (VRQVLRKKMS…SVHINVIEVR (69 aa)). Positions 217–239 (KQDDISRGDRNADRSSRRSREVR) are disordered.

The protein belongs to the universal ribosomal protein uS3 family. In terms of assembly, part of the 30S ribosomal subunit. Forms a tight complex with proteins S10 and S14.

In terms of biological role, binds the lower part of the 30S subunit head. Binds mRNA in the 70S ribosome, positioning it for translation. The polypeptide is Small ribosomal subunit protein uS3 (Xylella fastidiosa (strain 9a5c)).